The sequence spans 217 residues: Ribosomal RNA small subunit methyltransferase G (217 aa).

S-adenosyl-L-methionine is bound by residues G79, L84, 130-131, and R148; that span reads IE.

This sequence belongs to the methyltransferase superfamily. RNA methyltransferase RsmG family.

It localises to the cytoplasm. The enzyme catalyses guanosine(527) in 16S rRNA + S-adenosyl-L-methionine = N(7)-methylguanosine(527) in 16S rRNA + S-adenosyl-L-homocysteine. In terms of biological role, specifically methylates the N7 position of guanine in position 527 of 16S rRNA. The protein is Ribosomal RNA small subunit methyltransferase G of Desulfotalea psychrophila (strain LSv54 / DSM 12343).